The following is a 247-amino-acid chain: Cell division protein ZapD (247 aa).

This sequence belongs to the ZapD family. In terms of assembly, interacts with FtsZ.

The protein resides in the cytoplasm. Functionally, cell division factor that enhances FtsZ-ring assembly. Directly interacts with FtsZ and promotes bundling of FtsZ protofilaments, with a reduction in FtsZ GTPase activity. This is Cell division protein ZapD from Salmonella arizonae (strain ATCC BAA-731 / CDC346-86 / RSK2980).